The primary structure comprises 100 residues: Large ribosomal subunit protein bL21 (100 aa).

Belongs to the bacterial ribosomal protein bL21 family. Part of the 50S ribosomal subunit. Contacts protein L20.

Functionally, this protein binds to 23S rRNA in the presence of protein L20. The polypeptide is Large ribosomal subunit protein bL21 (Mycoplasma genitalium (strain ATCC 33530 / DSM 19775 / NCTC 10195 / G37) (Mycoplasmoides genitalium)).